A 546-amino-acid chain; its full sequence is Probable protein kinase UbiB (546 aa).

One can recognise a Protein kinase domain in the interval 124–502 (DFDIKPLASA…QARQGQSRYL (379 aa)). ATP is bound by residues 130–138 (LASASIAQV) and K153. The active-site Proton acceptor is D288. The next 2 helical transmembrane spans lie at 499 to 519 (SRYL…LLIS) and 521 to 541 (VEAD…WIIG).

Belongs to the ABC1 family. UbiB subfamily.

The protein resides in the cell inner membrane. Its pathway is cofactor biosynthesis; ubiquinone biosynthesis [regulation]. In terms of biological role, is probably a protein kinase regulator of UbiI activity which is involved in aerobic coenzyme Q (ubiquinone) biosynthesis. The sequence is that of Probable protein kinase UbiB from Pectobacterium carotovorum subsp. carotovorum (strain PC1).